Here is a 67-residue protein sequence, read N- to C-terminus: DNA gyrase inhibitor YacG (67 aa).

Zn(2+) is bound by residues cysteine 8, cysteine 11, cysteine 27, and cysteine 31.

It belongs to the DNA gyrase inhibitor YacG family. Interacts with GyrB. It depends on Zn(2+) as a cofactor.

Its function is as follows. Inhibits all the catalytic activities of DNA gyrase by preventing its interaction with DNA. Acts by binding directly to the C-terminal domain of GyrB, which probably disrupts DNA binding by the gyrase. In Ralstonia pickettii (strain 12J), this protein is DNA gyrase inhibitor YacG.